Here is a 331-residue protein sequence, read N- to C-terminus: Aldo-keto reductase family 7 member A3 (331 aa).

Ser6 bears the Phosphoserine mark. Met17, Asp44, and Tyr49 together coordinate NADPH. The active-site Proton donor is the Tyr49. Phosphoserine is present on Ser85. NADPH is bound by residues His113, Ser143, Asn144, Asn198, Leu200, Gly202, Lys208, Tyr209, and Arg222. Phosphothreonine is present on Thr227. NADPH-binding residues include Ser290, Gln294, and Asn298.

The protein belongs to the aldo/keto reductase family. Aldo/keto reductase 2 subfamily. Homodimer. Expressed in colon, kidney, liver, pancreas, adenocarcinoma and endometrium.

It localises to the cytoplasm. The catalysed reaction is a primary alcohol + NADP(+) = an aldehyde + NADPH + H(+). It catalyses the reaction aflatoxin B1 dialdehyde + NADPH + H(+) = aflatoxin B1 C(6a)-monoaldehyde + NADP(+). It carries out the reaction aflatoxin B1 dialdehyde + NADPH + H(+) = aflatoxin B1 C(8)-monoaldehyde + NADP(+). The enzyme catalyses aflatoxin B1 C(6a)-monoaldehyde + NADPH + 2 H(+) = aflatoxin B1 triol + NADP(+). Inhibited by citrate. Catalyzes the NADPH-dependent reduction of various carbonyl-containing compounds, including aldehydes, ketones, and toxic products from cellular metabolism or environmental exposure. Can reduce the dialdehyde form of aflatoxin B1 (AFB1) into alcohol derivatives, via monoaldehydes intermediates. Can reduce the dialdehyde form of aflatoxin B1 (AFB1) into alcohol derivatives, via monoaldehydes intermediates, thus preventing the formation of protein adducts that contribute to AFB1-induced toxicity. This Homo sapiens (Human) protein is Aldo-keto reductase family 7 member A3.